A 4555-amino-acid chain; its full sequence is Protocadherin Fat 3 (4555 aa).

A signal peptide spans 1 to 31 (MSVTMGHCMGTKPPSCIILLLLKLFATVSQG). Over 32 to 4153 (LPGTGPLGFH…AGHSYVGKEE (4122 aa)) the chain is Extracellular. Cadherin domains lie at 43–157 (THST…RPLF), 158–262 (SPTT…NEHA), 263–374 (PIIH…TPVR), 376–471 (EKDV…TPEF), 472–577 (QEAL…SPLF), 578–680 (EKVA…SKSF), 726–830 (KSFP…NPVF), 831–935 (LQDS…SPAF), 936–1042 (IPSS…TPYF), 1043–1147 (PDFA…APLT), 1148–1253 (SEPI…RPQF), 1254–1358 (PEKV…SPIP), 1362–1459 (DEPF…GPEF), 1460–1565 (SQPH…SPYF), 1566–1768 (TNPL…PPVF), 1769–1882 (LFSQ…PPVF), 1883–1985 (TQAV…TQSF), 1982–2083 (TQSF…SPVF), 2084–2185 (VGLP…MPVF), 2186–2286 (DKPF…PPVF), 2287–2393 (DQPT…PPVF), 2394–2495 (NQLI…SPAF), 2496–2599 (SQST…APQF), 2600–2707 (MTVE…LPSF), 2708–2813 (TQSQ…KPVF), 2814–2923 (ETST…APVF), 2924–3028 (AHEV…SPVC), 3029–3130 (DQVA…PPVF), 3131–3235 (SSNH…PPVF), 3236–3340 (ERRD…PPRF), 3341–3445 (SQDV…SPVF), 3446–3550 (TPAN…KPTA), and 3551–3660 (IPLE…PEDF). A glycan (N-linked (GlcNAc...) asparagine) is linked at asparagine 48. A glycan (N-linked (GlcNAc...) asparagine) is linked at asparagine 341. Asparagine 481, asparagine 562, asparagine 667, asparagine 799, asparagine 879, asparagine 898, and asparagine 1006 each carry an N-linked (GlcNAc...) asparagine glycan. Asparagine 1367 and asparagine 1429 each carry an N-linked (GlcNAc...) asparagine glycan. Residue asparagine 1751 is glycosylated (N-linked (GlcNAc...) asparagine). N-linked (GlcNAc...) asparagine glycans are attached at residues asparagine 1944, asparagine 1993, and asparagine 1996. 4 N-linked (GlcNAc...) asparagine glycosylation sites follow: asparagine 2208, asparagine 2292, asparagine 2331, and asparagine 2467. N-linked (GlcNAc...) asparagine glycosylation occurs at asparagine 2734. N-linked (GlcNAc...) asparagine glycosylation is present at asparagine 3000. N-linked (GlcNAc...) asparagine glycosylation is present at asparagine 3201. 3 N-linked (GlcNAc...) asparagine glycosylation sites follow: asparagine 3449, asparagine 3618, and asparagine 3741. The region spanning 3794–3832 (SNDPCVEKPCPEDMQCVGYEASRRPFLCQCPPGKLGECS) is the EGF-like 1 domain. Intrachain disulfides connect cysteine 3798–cysteine 3809, cysteine 3803–cysteine 3821, and cysteine 3823–cysteine 3831. Positions 3834–4017 (HTSLSFAGNS…VGLTELKLGC (184 aa)) constitute a Laminin G-like domain. N-linked (GlcNAc...) asparagine glycosylation is present at asparagine 3926. 10 cysteine pairs are disulfide-bonded: cysteine 3984/cysteine 4017, cysteine 4024/cysteine 4035, cysteine 4029/cysteine 4045, cysteine 4047/cysteine 4056, cysteine 4063/cysteine 4074, cysteine 4068/cysteine 4083, cysteine 4085/cysteine 4094, cysteine 4101/cysteine 4112, cysteine 4106/cysteine 4121, and cysteine 4123/cysteine 4132. EGF-like domains follow at residues 4020–4057 (YPDA…TNCE) and 4059–4095 (EITA…VTCE). Residues 4097-4133 (DVDECEREECENGGSCVNLFGSFFCNCTPGYVGQYCG) enclose the EGF-like 4; calcium-binding domain. Residues 4154-4174 (LIGIAVVLFVIFTLIVLFIVF) form a helical membrane-spanning segment. Residues 4175–4555 (RKKVFRKNYS…FVETQQQTQV (381 aa)) lie on the Cytoplasmic side of the membrane. Disordered regions lie at residues 4300 to 4353 (IRKN…YHWD) and 4395 to 4474 (GGYD…LGGP). Residues 4322–4343 (CFTNSNKGSNSEVQSLSSFQSD) show a composition bias toward polar residues. Omega-N-methylarginine occurs at positions 4508 and 4518.

As to expression, restricted to the nervous system, mainly in brain. In brain, it is highly expressed in the olfactory bulb and retina. In the developing olfactory bulb, it localizes along the dendrites of these cells as well as in their axons to some extent. In retina, it cocentrates in the inner plexiform layer throughout development (at protein level).

It is found in the membrane. Functionally, may play a role in the interactions between neurites derived from specific subsets of neurons during development. The sequence is that of Protocadherin Fat 3 (Fat3) from Mus musculus (Mouse).